Consider the following 198-residue polypeptide: Chitin synthase 2 (198 aa).

This sequence belongs to the chitin synthase family. Class III subfamily.

It is found in the cell membrane. It catalyses the reaction [(1-&gt;4)-N-acetyl-beta-D-glucosaminyl](n) + UDP-N-acetyl-alpha-D-glucosamine = [(1-&gt;4)-N-acetyl-beta-D-glucosaminyl](n+1) + UDP + H(+). Its function is as follows. Polymerizes chitin, a structural polymer of the cell wall and septum, by transferring the sugar moiety of UDP-GlcNAc to the non-reducing end of the growing chitin polymer. This Rhinocladiella atrovirens protein is Chitin synthase 2 (CHS2).